The primary structure comprises 190 residues: Shikimate kinase (190 aa).

Position 14–19 (14–19 (GAGKST)) interacts with ATP. Position 18 (serine 18) interacts with Mg(2+). Substrate-binding residues include aspartate 36, arginine 60, and glycine 82. Position 120 (arginine 120) interacts with ATP. Arginine 139 serves as a coordination point for substrate.

It belongs to the shikimate kinase family. In terms of assembly, monomer. Requires Mg(2+) as cofactor.

It is found in the cytoplasm. The enzyme catalyses shikimate + ATP = 3-phosphoshikimate + ADP + H(+). It functions in the pathway metabolic intermediate biosynthesis; chorismate biosynthesis; chorismate from D-erythrose 4-phosphate and phosphoenolpyruvate: step 5/7. Functionally, catalyzes the specific phosphorylation of the 3-hydroxyl group of shikimic acid using ATP as a cosubstrate. This is Shikimate kinase from Thioalkalivibrio sulfidiphilus (strain HL-EbGR7).